Reading from the N-terminus, the 480-residue chain is Cysteine--tRNA ligase (480 aa).

C29 is a binding site for Zn(2+). Residues 31–41 carry the 'HIGH' region motif; that stretch reads PTVYGHAHLGH. Positions 221, 246, and 250 each coordinate Zn(2+). Positions 278–282 match the 'KMSKS' region motif; the sequence is KMGKS. ATP is bound at residue K281.

It belongs to the class-I aminoacyl-tRNA synthetase family. Monomer. Requires Zn(2+) as cofactor.

It localises to the cytoplasm. It catalyses the reaction tRNA(Cys) + L-cysteine + ATP = L-cysteinyl-tRNA(Cys) + AMP + diphosphate. The protein is Cysteine--tRNA ligase of Chlorobium chlorochromatii (strain CaD3).